The sequence spans 162 residues: MDKKINPKKVEMFNSLKEFLDGKDNIFFLDYRGLTVAELTKLRSRVEDEKGALKVVKNNIMKRVLKDKDIEGLDSYLLGPTAVVTAFDEANVIAKIFYEFVKTTTLKVKGGFVLGEVYDELKLSAYSKLPTKIESISLFMSVLKAPMSKLVRTLKALSDIKV.

It belongs to the universal ribosomal protein uL10 family. In terms of assembly, part of the ribosomal stalk of the 50S ribosomal subunit. The N-terminus interacts with L11 and the large rRNA to form the base of the stalk. The C-terminus forms an elongated spine to which L12 dimers bind in a sequential fashion forming a multimeric L10(L12)X complex.

Forms part of the ribosomal stalk, playing a central role in the interaction of the ribosome with GTP-bound translation factors. The protein is Large ribosomal subunit protein uL10 of Borrelia duttonii (strain Ly).